A 438-amino-acid chain; its full sequence is Shikimate transporter (438 aa).

A run of 12 helical transmembrane segments spans residues 28-48 (FAGA…AALV), 64-84 (LAAF…GVIF), 109-129 (ALIG…ILLV), 133-153 (AIQG…SVES), 168-188 (VGYG…SMMT), 193-213 (FLSW…LGAL), 255-275 (IIAL…FALN), 287-307 (LFLN…PCFA), 318-337 (VYIT…FMAL), 341-363 (SIFW…VVCV), 387-407 (VASV…ITYF), and 411-431 (WHSV…TALL).

Belongs to the major facilitator superfamily. Metabolite:H+ Symporter (MHS) family (TC 2.A.1.6) family.

Its subcellular location is the cell inner membrane. The enzyme catalyses shikimate(in) + H(+)(in) = shikimate(out) + H(+)(out). Functionally, involved in the uptake of shikimate, an intermediate in the aromatic amino acid biosynthetic pathway. This is Shikimate transporter from Escherichia coli (strain K12).